A 308-amino-acid chain; its full sequence is Methionyl-tRNA formyltransferase (308 aa).

110–113 (SLLP) is a (6S)-5,6,7,8-tetrahydrofolate binding site.

This sequence belongs to the Fmt family.

The catalysed reaction is L-methionyl-tRNA(fMet) + (6R)-10-formyltetrahydrofolate = N-formyl-L-methionyl-tRNA(fMet) + (6S)-5,6,7,8-tetrahydrofolate + H(+). Attaches a formyl group to the free amino group of methionyl-tRNA(fMet). The formyl group appears to play a dual role in the initiator identity of N-formylmethionyl-tRNA by promoting its recognition by IF2 and preventing the misappropriation of this tRNA by the elongation apparatus. This chain is Methionyl-tRNA formyltransferase, found in Neisseria gonorrhoeae (strain ATCC 700825 / FA 1090).